Consider the following 473-residue polypeptide: ATP synthase subunit beta 2 (473 aa).

158 to 165 (GGAGVGKT) contributes to the ATP binding site.

The protein belongs to the ATPase alpha/beta chains family. As to quaternary structure, F-type ATPases have 2 components, CF(1) - the catalytic core - and CF(0) - the membrane proton channel. CF(1) has five subunits: alpha(3), beta(3), gamma(1), delta(1), epsilon(1). CF(0) has three main subunits: a(1), b(2) and c(9-12). The alpha and beta chains form an alternating ring which encloses part of the gamma chain. CF(1) is attached to CF(0) by a central stalk formed by the gamma and epsilon chains, while a peripheral stalk is formed by the delta and b chains.

It is found in the cell membrane. The catalysed reaction is ATP + H2O + 4 H(+)(in) = ADP + phosphate + 5 H(+)(out). Produces ATP from ADP in the presence of a proton gradient across the membrane. The catalytic sites are hosted primarily by the beta subunits. This is ATP synthase subunit beta 2 from Listeria welshimeri serovar 6b (strain ATCC 35897 / DSM 20650 / CCUG 15529 / CIP 8149 / NCTC 11857 / SLCC 5334 / V8).